A 101-amino-acid chain; its full sequence is NADH-quinone oxidoreductase subunit K (101 aa).

The next 3 helical transmembrane spans lie at 4–24 (LSHYLVLGALLFAIGVVGIFL), 30–50 (IILLMSIELMLLAVNMNFVAF), and 61–81 (IFVFFILTVAAAEAAIGLAIL).

Belongs to the complex I subunit 4L family. In terms of assembly, NDH-1 is composed of 14 different subunits. Subunits NuoA, H, J, K, L, M, N constitute the membrane sector of the complex.

Its subcellular location is the cell inner membrane. The catalysed reaction is a quinone + NADH + 5 H(+)(in) = a quinol + NAD(+) + 4 H(+)(out). Its function is as follows. NDH-1 shuttles electrons from NADH, via FMN and iron-sulfur (Fe-S) centers, to quinones in the respiratory chain. The immediate electron acceptor for the enzyme in this species is believed to be ubiquinone. Couples the redox reaction to proton translocation (for every two electrons transferred, four hydrogen ions are translocated across the cytoplasmic membrane), and thus conserves the redox energy in a proton gradient. This Nitrosomonas europaea (strain ATCC 19718 / CIP 103999 / KCTC 2705 / NBRC 14298) protein is NADH-quinone oxidoreductase subunit K.